We begin with the raw amino-acid sequence, 139 residues long: Small ribosomal subunit protein uS12 (139 aa).

Residues 1-55 form a disordered region; sequence MPTINQLIRKGRKAKVKKSDSPALNKGYNSFKKVQTDLSSPQKRGVCTRVGTMTP. A compositionally biased stretch (polar residues) spans 32 to 42; it reads KKVQTDLSSPQ.

Belongs to the universal ribosomal protein uS12 family. As to quaternary structure, part of the 30S ribosomal subunit. Contacts proteins S8 and S17. May interact with IF1 in the 30S initiation complex.

With S4 and S5 plays an important role in translational accuracy. Functionally, interacts with and stabilizes bases of the 16S rRNA that are involved in tRNA selection in the A site and with the mRNA backbone. Located at the interface of the 30S and 50S subunits, it traverses the body of the 30S subunit contacting proteins on the other side and probably holding the rRNA structure together. The combined cluster of proteins S8, S12 and S17 appears to hold together the shoulder and platform of the 30S subunit. The protein is Small ribosomal subunit protein uS12 of Halalkalibacterium halodurans (strain ATCC BAA-125 / DSM 18197 / FERM 7344 / JCM 9153 / C-125) (Bacillus halodurans).